Consider the following 152-residue polypeptide: 3-dehydroquinate dehydratase (152 aa).

The active-site Proton acceptor is the Tyr-23. Substrate-binding residues include Asn-74, His-80, and Asp-87. His-100 functions as the Proton donor in the catalytic mechanism. Residues Leu-101 to Ser-102 and Arg-111 each bind substrate.

It belongs to the type-II 3-dehydroquinase family. As to quaternary structure, homododecamer.

The enzyme catalyses 3-dehydroquinate = 3-dehydroshikimate + H2O. It functions in the pathway metabolic intermediate biosynthesis; chorismate biosynthesis; chorismate from D-erythrose 4-phosphate and phosphoenolpyruvate: step 3/7. In terms of biological role, catalyzes a trans-dehydration via an enolate intermediate. This Clostridium botulinum (strain Langeland / NCTC 10281 / Type F) protein is 3-dehydroquinate dehydratase.